A 175-amino-acid polypeptide reads, in one-letter code: Adenine phosphoribosyltransferase (175 aa).

It belongs to the purine/pyrimidine phosphoribosyltransferase family. Homodimer.

Its subcellular location is the cytoplasm. The enzyme catalyses AMP + diphosphate = 5-phospho-alpha-D-ribose 1-diphosphate + adenine. The protein operates within purine metabolism; AMP biosynthesis via salvage pathway; AMP from adenine: step 1/1. Functionally, catalyzes a salvage reaction resulting in the formation of AMP, that is energically less costly than de novo synthesis. The polypeptide is Adenine phosphoribosyltransferase (Pelagibacter ubique (strain HTCC1062)).